Reading from the N-terminus, the 211-residue chain is uncharacterized protein (211 aa).

2 disordered regions span residues 45–74 (RSCG…GALS) and 147–211 (AETR…WEEP). Positions 48–71 (GRSSTGGCSPCSGPGPSSPRTSRG) are enriched in low complexity. The span at 195 to 205 (DSGSIKMSENE) shows a compositional bias: polar residues.

This is an uncharacterized protein from Homo sapiens (Human).